The sequence spans 149 residues: MEKAILITFLIATTSMVYQTIGQEEEISPISPESLAYEPAAAYEYDHELLSHMTTRRIKFLQDCSDKMSSKCNVEMTEGLIDDKPVSEDCCVNFLKIGRECHEGLMTFVFATYELKDVASAILPRSKRMWNKCVETTAAKIGAPLAFET.

Positions 1–22 (MEKAILITFLIATTSMVYQTIG) are cleaved as a signal peptide.

In terms of tissue distribution, mostly expressed in embryo sac cells. Restricted to synergid cells, especially in the filiform apparatus of mature female gametophyte, via MYB98-mediated transcription regulation. Also detected at low levels in egg and central cells.

This Arabidopsis thaliana (Mouse-ear cress) protein is Protein DOWN-REGULATED IN DIF1 11.